The primary structure comprises 409 residues: Glycosaminoglycan xylosylkinase (409 aa).

Residues 1-6 (MKLKQR) are Cytoplasmic-facing. Residues 7-25 (VVLLAILLVIFIFTKVFLI) form a helical; Signal-anchor for type II membrane protein membrane-spanning segment. At 26–409 (DNLDTSAANR…VEDRMPLSHL (384 aa)) the chain is on the lumenal side. Residues Gln107 and Lys123 each contribute to the ATP site. Position 142 (Asp142) interacts with Mn(2+). A glycan (N-linked (GlcNAc...) asparagine) is linked at Asn193. 2 disulfides stabilise this stretch: Cys196–Cys211 and Cys201–Cys204. 222-225 (TLWL) lines the ATP pocket. 2 cysteine pairs are disulfide-bonded: Cys257–Cys331 and Cys332–Cys389. Asp289 is a catalytic residue. The ATP site is built by Glu294 and Asp309. Asp309 contributes to the Mn(2+) binding site.

This sequence belongs to the FAM20 family. It depends on Mn(2+) as a cofactor. In terms of tissue distribution, widely expressed. Strongly expressed in pancreas, spleen and fetal liver.

Its subcellular location is the golgi apparatus membrane. The catalysed reaction is 3-O-(beta-D-galactosyl-(1-&gt;3)-beta-D-galactosyl-(1-&gt;4)-beta-D-xylosyl)-L-seryl-[protein] + ATP = 3-O-(beta-D-galactosyl-(1-&gt;3)-beta-D-galactosyl-(1-&gt;4)-beta-D-2-O-phosphoxylosyl)-L-seryl-[protein] + ADP + H(+). Its function is as follows. Responsible for the 2-O-phosphorylation of xylose in the glycosaminoglycan-protein linkage region of proteoglycans thereby regulating the amount of mature GAG chains. Sulfated glycosaminoglycans (GAGs), including heparan sulfate and chondroitin sulfate, are synthesized on the so-called common GAG-protein linkage region (GlcUAbeta1-3Galbeta1-3Galbeta1-4Xylbeta1-O-Ser) of core proteins, which is formed by the stepwise addition of monosaccharide residues by the respective specific glycosyltransferases. Xylose 2-O-phosphorylation may influence the catalytic activity of B3GAT3 (GlcAT-I) which completes the precursor tetrasaccharide of GAG-protein linkage regions on which the repeating disaccharide region is synthesized. The polypeptide is Glycosaminoglycan xylosylkinase (Homo sapiens (Human)).